The chain runs to 696 residues: Probable E3 ubiquitin ligase complex SCF subunit sconB (696 aa).

The span at Met-1–His-12 shows a compositional bias: basic and acidic residues. Residues Met-1–Arg-72 form a disordered region. A compositionally biased stretch (polar residues) spans Pro-55–Lys-69. An F-box domain is found at Ile-193–Met-239. Residues Ser-290 to Val-314 form a disordered region. The segment covering Arg-302–Met-313 has biased composition (basic and acidic residues). WD repeat units follow at residues Gly-365–Thr-402, Gly-405–Ser-444, His-446–Leu-482, Gly-484–His-525, Asp-579–Thr-622, Phe-623–Thr-662, and Gly-665–Thr-696. The interval Asn-554–Pro-596 is disordered.

It belongs to the WD repeat MET30/SCONB/SCON-2 family. Component of the SCF(sconB) E3 ubiquitin ligase complex.

It participates in protein modification; protein ubiquitination. Its function is as follows. Component of the SCF(sconB) E3 ubiquitin ligase complex involved in the regulation of sulfur metabolite repression, probably by mediating the inactivation or degradation of the metR transcription factor. The polypeptide is Probable E3 ubiquitin ligase complex SCF subunit sconB (sconB) (Aspergillus fumigatus (strain ATCC MYA-4609 / CBS 101355 / FGSC A1100 / Af293) (Neosartorya fumigata)).